Consider the following 517-residue polypeptide: Carotenoid phi-ring synthase (517 aa).

A disordered region spans residues 1 to 24 (MFARDSGRGHRHGRDRQAAVVPAP). FAD contacts are provided by residues A45, 64–65 (ER), R72, Y99, D461, and M472.

The protein belongs to the carotenoid/retinoid oxidoreductase family. It depends on FAD as a cofactor.

It carries out the reaction a carotenoid beta-end derivative + 2 A = a carotenoid phi-end derivative + 2 AH2. It participates in carotenoid biosynthesis. In terms of biological role, involved in the biosynthesis of isorenieratene, a carotenoid with aromatic end groups. Catalyzes the introduction of two additional double bonds into each ionone ring of beta-carotene to produce isorenieratene. The reaction includes an intramolecular methyl transfer from position C1 to position C2 of the ring. The polypeptide is Carotenoid phi-ring synthase (Streptomyces griseus).